The chain runs to 267 residues: Thymidylate synthase (267 aa).

A dUMP-binding site is contributed by R24. H54 contributes to the (6R)-5,10-methylene-5,6,7,8-tetrahydrofolate binding site. 129–130 (RR) is a binding site for dUMP. C149 functions as the Nucleophile in the catalytic mechanism. Residues 169–172 (RSAD), N180, and 210–212 (HVY) contribute to the dUMP site. D172 serves as a coordination point for (6R)-5,10-methylene-5,6,7,8-tetrahydrofolate. Residue A266 participates in (6R)-5,10-methylene-5,6,7,8-tetrahydrofolate binding.

This sequence belongs to the thymidylate synthase family. Bacterial-type ThyA subfamily. Homodimer.

It localises to the cytoplasm. The catalysed reaction is dUMP + (6R)-5,10-methylene-5,6,7,8-tetrahydrofolate = 7,8-dihydrofolate + dTMP. It participates in pyrimidine metabolism; dTTP biosynthesis. In terms of biological role, catalyzes the reductive methylation of 2'-deoxyuridine-5'-monophosphate (dUMP) to 2'-deoxythymidine-5'-monophosphate (dTMP) while utilizing 5,10-methylenetetrahydrofolate (mTHF) as the methyl donor and reductant in the reaction, yielding dihydrofolate (DHF) as a by-product. This enzymatic reaction provides an intracellular de novo source of dTMP, an essential precursor for DNA biosynthesis. This Paenarthrobacter aurescens (strain TC1) protein is Thymidylate synthase.